A 122-amino-acid chain; its full sequence is Large ribosomal subunit protein uL14 (122 aa).

The protein belongs to the universal ribosomal protein uL14 family. In terms of assembly, part of the 50S ribosomal subunit. Forms a cluster with proteins L3 and L19. In the 70S ribosome, L14 and L19 interact and together make contacts with the 16S rRNA in bridges B5 and B8.

In terms of biological role, binds to 23S rRNA. Forms part of two intersubunit bridges in the 70S ribosome. The chain is Large ribosomal subunit protein uL14 from Phytoplasma mali (strain AT).